The chain runs to 201 residues: Recombination protein RecR (201 aa).

Residues 60-75 (CSECGNMDVSDPCTVC) form a C4-type zinc finger. The Toprim domain occupies 83 to 178 (AAICVVETVG…SITSLARGVP (96 aa)).

The protein belongs to the RecR family.

Functionally, may play a role in DNA repair. It seems to be involved in an RecBC-independent recombinational process of DNA repair. It may act with RecF and RecO. The chain is Recombination protein RecR from Maricaulis maris (strain MCS10) (Caulobacter maris).